The chain runs to 164 residues: S-ribosylhomocysteine lyase (164 aa).

Positions 54, 58, and 128 each coordinate Fe cation.

This sequence belongs to the LuxS family. As to quaternary structure, homodimer. Fe cation serves as cofactor.

It carries out the reaction S-(5-deoxy-D-ribos-5-yl)-L-homocysteine = (S)-4,5-dihydroxypentane-2,3-dione + L-homocysteine. In terms of biological role, involved in the synthesis of autoinducer 2 (AI-2) which is secreted by bacteria and is used to communicate both the cell density and the metabolic potential of the environment. The regulation of gene expression in response to changes in cell density is called quorum sensing. Catalyzes the transformation of S-ribosylhomocysteine (RHC) to homocysteine (HC) and 4,5-dihydroxy-2,3-pentadione (DPD). The chain is S-ribosylhomocysteine lyase from Campylobacter hominis (strain ATCC BAA-381 / DSM 21671 / CCUG 45161 / LMG 19568 / NCTC 13146 / CH001A).